Reading from the N-terminus, the 186-residue chain is MEKVDVYDELVNLKATELRLGLPGTEETVSCGKSNKRVLPEATEKEIESTGKTETASPPKAQIVGWPPVRSYRKNNVQTKKSESEGQGNYVKVSMDGAPYLRKIDLTMYKQYPELMKSLENMFKFSVGEYFEREGYKGSDFVPTYEDKDGDWMLVGDVPWEMFVSSCKRLRIMKGSEVKGLGCGGL.

The EAR-like (transcriptional repression) signature appears at 18 to 22; sequence LRLGL. The disordered stretch occupies residues 25–62; that stretch reads TEETVSCGKSNKRVLPEATEKEIESTGKTETASPPKAQ. Residues 38-51 show a composition bias toward basic and acidic residues; that stretch reads VLPEATEKEIESTG. Positions 88-175 constitute a PB1 domain; that stretch reads GNYVKVSMDG…SCKRLRIMKG (88 aa).

This sequence belongs to the Aux/IAA family. In terms of assembly, homodimers and heterodimers. Interacts with TPL. Preferentially expressed in stems, leaves and flowers.

Its subcellular location is the nucleus. Its function is as follows. Aux/IAA proteins are short-lived transcriptional factors that function as repressors of early auxin response genes at low auxin concentrations. Repression is thought to result from the interaction with auxin response factors (ARFs), proteins that bind to the auxin-responsive promoter element (AuxRE). Formation of heterodimers with ARF proteins may alter their ability to modulate early auxin response genes expression. This is Auxin-responsive protein IAA4 (IAA4) from Arabidopsis thaliana (Mouse-ear cress).